The primary structure comprises 70 residues: UPF0337 protein BT9727_3385 (70 aa).

Belongs to the UPF0337 (CsbD) family.

The chain is UPF0337 protein BT9727_3385 from Bacillus thuringiensis subsp. konkukian (strain 97-27).